We begin with the raw amino-acid sequence, 712 residues long: Amino-acid acetyltransferase, mitochondrial (712 aa).

The transit peptide at 1–47 directs the protein to the mitochondrion; it reads MFVRTCRSSCNAWTNATSTTQAGSLLPPNAHRSVVLTLSLQACSART. The segment at 55 to 99 is disordered; it reads FASTTSQSKRQEAEAEEKRQVSPRLGPSAPRSSYPSSAEARQKRD. Residues 63–74 show a composition bias toward basic and acidic residues; that stretch reads KRQEAEAEEKRQ. Residues 81–93 show a composition bias toward low complexity; the sequence is PSAPRSSYPSSAE. Positions 534 to 702 constitute an N-acetyltransferase domain; it reads GVPRLRLTDT…YEDVCRNIAP (169 aa).

This sequence belongs to the acetyltransferase family.

The protein localises to the mitochondrion. The enzyme catalyses L-glutamate + acetyl-CoA = N-acetyl-L-glutamate + CoA + H(+). It participates in amino-acid biosynthesis; L-arginine biosynthesis; N(2)-acetyl-L-ornithine from L-glutamate: step 1/4. With respect to regulation, inhibited by arginine. In terms of biological role, N-acetylglutamate synthase involved in arginine biosynthesis. The chain is Amino-acid acetyltransferase, mitochondrial (arg-14) from Neurospora crassa (strain ATCC 24698 / 74-OR23-1A / CBS 708.71 / DSM 1257 / FGSC 987).